The sequence spans 193 residues: Xanthine phosphoribosyltransferase (193 aa).

Xanthine-binding residues include Leu-20 and Asn-27. 129–133 contacts 5-phospho-alpha-D-ribose 1-diphosphate; sequence ANGKA. Lys-157 is a binding site for xanthine.

This sequence belongs to the purine/pyrimidine phosphoribosyltransferase family. Xpt subfamily. In terms of assembly, homodimer.

Its subcellular location is the cytoplasm. The enzyme catalyses XMP + diphosphate = xanthine + 5-phospho-alpha-D-ribose 1-diphosphate. The protein operates within purine metabolism; XMP biosynthesis via salvage pathway; XMP from xanthine: step 1/1. Its function is as follows. Converts the preformed base xanthine, a product of nucleic acid breakdown, to xanthosine 5'-monophosphate (XMP), so it can be reused for RNA or DNA synthesis. The sequence is that of Xanthine phosphoribosyltransferase from Bifidobacterium animalis subsp. lactis (strain AD011).